The primary structure comprises 372 residues: Maltose/maltodextrin import ATP-binding protein MalK (372 aa).

Positions 4 to 234 constitute an ABC transporter domain; sequence VTLKNVCKAY…PQNRFVAGFI (231 aa). Residue 36 to 43 participates in ATP binding; it reads GPSGCGKS.

It belongs to the ABC transporter superfamily. Maltooligosaccharide importer (TC 3.A.1.1.1) family. The complex is composed of two ATP-binding proteins (MalK), two transmembrane proteins (MalG and MalK) and a solute-binding protein (MalE).

The protein resides in the cell inner membrane. The enzyme catalyses D-maltose(out) + ATP + H2O = D-maltose(in) + ADP + phosphate + H(+). Part of the ABC transporter complex MalEFGK involved in maltose/maltodextrin import. Responsible for energy coupling to the transport system. The chain is Maltose/maltodextrin import ATP-binding protein MalK from Vibrio parahaemolyticus serotype O3:K6 (strain RIMD 2210633).